Here is a 91-residue protein sequence, read N- to C-terminus: ATP synthase epsilon chain (91 aa).

This sequence belongs to the ATPase epsilon chain family. As to quaternary structure, F-type ATPases have 2 components, CF(1) - the catalytic core - and CF(0) - the membrane proton channel. CF(1) has five subunits: alpha(3), beta(3), gamma(1), delta(1), epsilon(1). CF(0) has three main subunits: a, b and c.

It localises to the cell membrane. Its function is as follows. Produces ATP from ADP in the presence of a proton gradient across the membrane. This chain is ATP synthase epsilon chain (atpC), found in Micrococcus luteus (strain ATCC 4698 / DSM 20030 / JCM 1464 / CCM 169 / CCUG 5858 / IAM 1056 / NBRC 3333 / NCIMB 9278 / NCTC 2665 / VKM Ac-2230) (Micrococcus lysodeikticus).